The chain runs to 316 residues: MNLILMINLFLYINGLDPVLTLGSLAFVLILISLPFSFWNVGENSNSSIVRILIASANILLAIQLVFRWIQSGHFPISNLYESLCFLTWGLTFIQLLIERTFPYPLIQAALTPISLLSIAFASFVLPDELKASSSLVPALKSNWLVMHVSVIMCSYAALLIGSLLSLVVLLSSSRETLQIRSNSMGIGGFKNKSENLNIVKSIDELIPITFSKSEELDNLSYRTITFGFLLLTFGLISGAVWANEAWGSWWSWDPKETWAFISWLIYAAYLHTRLSRGWQGKRPAIIAIIGLFIILICYIGVNFLGIGLHSYGWFL.

8 helical membrane passes run Val19–Trp39, Ser47–Phe67, Ile77–Leu97, Leu106–Leu126, Val151–Leu171, Thr224–Asn244, Thr258–Leu275, and Ala285–Leu305.

The protein belongs to the CcmF/CycK/Ccl1/NrfE/CcsA family. May interact with ccs1.

The protein localises to the cellular thylakoid membrane. Required during biogenesis of c-type cytochromes (cytochrome c6 and cytochrome f) at the step of heme attachment. The sequence is that of Cytochrome c biogenesis protein CcsA from Prochlorococcus marinus (strain SARG / CCMP1375 / SS120).